We begin with the raw amino-acid sequence, 562 residues long: Putative transport protein YE1478 (562 aa).

6 consecutive transmembrane segments (helical) span residues 8–28 (LLNG…LCLG), 32–52 (LGPI…LLGQ), 66–86 (FMLF…SIFF), 94–114 (MLAL…GKLF), 118–138 (IGLT…LVGA), and 158–178 (NLSL…ILGA). RCK C-terminal domains are found at residues 202–288 (LDTD…SFRN) and 290–373 (KEVF…KIGF). Helical transmembrane passes span 383-403 (LLAF…TFQF), 406-426 (FSFG…LGFL), 447-467 (FGLM…INSS), 475-495 (MLIS…IFGA), and 541-561 (IANV…PGIL).

The protein belongs to the AAE transporter (TC 2.A.81) family. YbjL subfamily.

Its subcellular location is the cell membrane. The protein is Putative transport protein YE1478 of Yersinia enterocolitica serotype O:8 / biotype 1B (strain NCTC 13174 / 8081).